The primary structure comprises 213 residues: Phosphoenolpyruvate guanylyltransferase (213 aa).

Positions 146, 161, and 164 each coordinate phosphoenolpyruvate.

This sequence belongs to the CofC family.

The catalysed reaction is phosphoenolpyruvate + GTP + H(+) = enolpyruvoyl-2-diphospho-5'-guanosine + diphosphate. The protein operates within cofactor biosynthesis; coenzyme F420 biosynthesis. Its function is as follows. Guanylyltransferase that catalyzes the activation of phosphoenolpyruvate (PEP) as enolpyruvoyl-2-diphospho-5'-guanosine, via the condensation of PEP with GTP. It is involved in the biosynthesis of coenzyme F420, a hydride carrier cofactor. This is Phosphoenolpyruvate guanylyltransferase from Mycolicibacterium vanbaalenii (strain DSM 7251 / JCM 13017 / BCRC 16820 / KCTC 9966 / NRRL B-24157 / PYR-1) (Mycobacterium vanbaalenii).